The following is a 1229-amino-acid chain: DNA-directed RNA polymerase subunit beta (1229 aa).

Residues 1175 to 1229 (ESIDEDEQPQGLGAFERGLEEVENGEEDDDKEKFYEDLMDASQEQDESADDDIDE) are disordered. Acidic residues-rich tracts occupy residues 1195 to 1204 (EVENGEEDDD) and 1211 to 1229 (DLMDASQEQDESADDDIDE).

It belongs to the RNA polymerase beta chain family. In terms of assembly, the RNAP catalytic core consists of 2 alpha, 1 beta, 1 beta' and 1 omega subunit. When a sigma factor is associated with the core the holoenzyme is formed, which can initiate transcription.

It catalyses the reaction RNA(n) + a ribonucleoside 5'-triphosphate = RNA(n+1) + diphosphate. Functionally, DNA-dependent RNA polymerase catalyzes the transcription of DNA into RNA using the four ribonucleoside triphosphates as substrates. The sequence is that of DNA-directed RNA polymerase subunit beta from Caldicellulosiruptor saccharolyticus (strain ATCC 43494 / DSM 8903 / Tp8T 6331).